The primary structure comprises 286 residues: Orotidine 5'-phosphate decarboxylase (286 aa).

Residues D35, K57 to H59, D89 to T98, Y239, and R257 each bind substrate. K91 acts as the Proton donor in catalysis.

The protein belongs to the OMP decarboxylase family.

The enzyme catalyses orotidine 5'-phosphate + H(+) = UMP + CO2. The protein operates within pyrimidine metabolism; UMP biosynthesis via de novo pathway; UMP from orotate: step 2/2. The protein is Orotidine 5'-phosphate decarboxylase (URA3) of Yarrowia lipolytica (strain CLIB 122 / E 150) (Yeast).